A 215-amino-acid polypeptide reads, in one-letter code: S-crystallin 2 (215 aa).

In terms of domain architecture, GST N-terminal spans 2–80 (PSYTLHYFNH…YLAREFGFHG (79 aa)). Residues 82–215 (NNLDMARVDF…YLKSRSSTDF (134 aa)) form the GST C-terminal domain.

Belongs to the GST superfamily. Lens.

S-crystallins are structural components of squids and octopi eye lens. Contains relatively little GST activity (1/1000 of that of mammalian GST enzyme). This is S-crystallin 2 (OCTS2) from Octopus vulgaris (Common octopus).